A 153-amino-acid chain; its full sequence is HTH-type transcriptional regulator Zrp (153 aa).

The HTH asnC-type domain maps to 2-63; that stretch reads IDYRDRHILS…LLDRKKINLP (62 aa). The H-T-H motif DNA-binding region spans 21-40; sequence LAEIAERVALSVSACSRRVA.

The chain is HTH-type transcriptional regulator Zrp (zrp) from Zymomonas mobilis subsp. mobilis (strain ATCC 10988 / DSM 424 / LMG 404 / NCIMB 8938 / NRRL B-806 / ZM1).